A 203-amino-acid chain; its full sequence is MTLVPYVVEDTGRGERAMDIYSRLLKDRIVMIGQEITEPLANTVIAQLLFLMSEDPTKDIQIFINSPGGYITAGLAIYDTIRFLGCDVNTYCIGQAASMGALLLSAGTKGKRYALPHSRMMIHQPSGGIIGTSADIQLQAAEILTLKKHLSNILAECTGQSVEKIIEDSERDFFMGAEEAIAYGLIDKVISSAKETKDKSIAS.

Ser98 (nucleophile) is an active-site residue. The active site involves His123.

The protein belongs to the peptidase S14 family. As to quaternary structure, fourteen ClpP subunits assemble into 2 heptameric rings which stack back to back to give a disk-like structure with a central cavity, resembling the structure of eukaryotic proteasomes.

The protein localises to the cytoplasm. It catalyses the reaction Hydrolysis of proteins to small peptides in the presence of ATP and magnesium. alpha-casein is the usual test substrate. In the absence of ATP, only oligopeptides shorter than five residues are hydrolyzed (such as succinyl-Leu-Tyr-|-NHMec, and Leu-Tyr-Leu-|-Tyr-Trp, in which cleavage of the -Tyr-|-Leu- and -Tyr-|-Trp bonds also occurs).. Functionally, cleaves peptides in various proteins in a process that requires ATP hydrolysis. Has a chymotrypsin-like activity. Plays a major role in the degradation of misfolded proteins. In Chlamydia trachomatis serovar A (strain ATCC VR-571B / DSM 19440 / HAR-13), this protein is ATP-dependent Clp protease proteolytic subunit 2.